The chain runs to 336 residues: Tetraacyldisaccharide 4'-kinase (336 aa).

T60–T67 contacts ATP.

The protein belongs to the LpxK family.

The catalysed reaction is a lipid A disaccharide + ATP = a lipid IVA + ADP + H(+). It functions in the pathway glycolipid biosynthesis; lipid IV(A) biosynthesis; lipid IV(A) from (3R)-3-hydroxytetradecanoyl-[acyl-carrier-protein] and UDP-N-acetyl-alpha-D-glucosamine: step 6/6. Its function is as follows. Transfers the gamma-phosphate of ATP to the 4'-position of a tetraacyldisaccharide 1-phosphate intermediate (termed DS-1-P) to form tetraacyldisaccharide 1,4'-bis-phosphate (lipid IVA). The chain is Tetraacyldisaccharide 4'-kinase from Pseudomonas entomophila (strain L48).